Reading from the N-terminus, the 397-residue chain is Monooxygenase 1 (397 aa).

Belongs to the 3-hydroxybenzoate 6-hydroxylase family. Monomer. The cofactor is FAD. In terms of tissue distribution, expressed in seedlings, roots, leaves, flowers and siliques.

This is Monooxygenase 1 from Arabidopsis thaliana (Mouse-ear cress).